The chain runs to 470 residues: Poly(A) polymerase catalytic subunit (470 aa).

Catalysis depends on residues Asp192 and Asp194.

This sequence belongs to the poxviridae poly(A) polymerase catalytic subunit family. Heterodimer of a large (catalytic) subunit and a small (regulatory) subunit.

It carries out the reaction RNA(n) + ATP = RNA(n)-3'-adenine ribonucleotide + diphosphate. In terms of biological role, polymerase that creates the 3'-poly(A) tail of mRNA's. This is Poly(A) polymerase catalytic subunit (PAPL) from Deerpox virus (strain Mule deer/United States/W-848-83/1983) (DPV).